Reading from the N-terminus, the 269-residue chain is Shikimate dehydrogenase (NADP(+)) (269 aa).

Residues 13–15 (SLS) and Thr-60 contribute to the shikimate site. The active-site Proton acceptor is Lys-64. Glu-76 is a binding site for NADP(+). The shikimate site is built by Asn-85 and Asp-100. NADP(+)-binding positions include 124–128 (GAGGA), 148–153 (NRTMSR), and Ile-209. Tyr-211 provides a ligand contact to shikimate. Gly-232 contacts NADP(+). Position 239 (Gln-239) interacts with shikimate.

Belongs to the shikimate dehydrogenase family. As to quaternary structure, monomer or homodimer.

It catalyses the reaction shikimate + NADP(+) = 3-dehydroshikimate + NADPH + H(+). It functions in the pathway metabolic intermediate biosynthesis; chorismate biosynthesis; chorismate from D-erythrose 4-phosphate and phosphoenolpyruvate: step 4/7. Its function is as follows. Involved in the biosynthesis of the chorismate, which leads to the biosynthesis of aromatic amino acids. Catalyzes the reversible NADPH linked reduction of 3-dehydroshikimate (DHSA) to yield shikimate (SA). It can also use NAD to oxidize shikimate. This is Shikimate dehydrogenase (NADP(+)) from Staphylococcus epidermidis (strain ATCC 35984 / DSM 28319 / BCRC 17069 / CCUG 31568 / BM 3577 / RP62A).